Here is a 332-residue protein sequence, read N- to C-terminus: ATP-dependent 6-phosphofructokinase (332 aa).

Residue Gly-11 coordinates ATP. Residue 21-25 (RSVVR) coordinates ADP. Residues 72-73 (RC) and 102-105 (GDGS) each bind ATP. Asp-103 contacts Mg(2+). 126–128 (TID) is a substrate binding site. The Proton acceptor role is filled by Asp-128. Arg-155 provides a ligand contact to ADP. Residues Arg-163 and 170–172 (MGR) each bind substrate. Residues 186-188 (GAE), Arg-212, and 214-216 (KLH) each bind ADP. Substrate is bound by residues Glu-223, Arg-256, and 262–265 (HIQR).

This sequence belongs to the phosphofructokinase type A (PFKA) family. ATP-dependent PFK group I subfamily. Prokaryotic clade 'B1' sub-subfamily. In terms of assembly, homotetramer. Requires Mg(2+) as cofactor.

It is found in the cytoplasm. The catalysed reaction is beta-D-fructose 6-phosphate + ATP = beta-D-fructose 1,6-bisphosphate + ADP + H(+). It functions in the pathway carbohydrate degradation; glycolysis; D-glyceraldehyde 3-phosphate and glycerone phosphate from D-glucose: step 3/4. Allosterically activated by ADP and other diphosphonucleosides, and allosterically inhibited by phosphoenolpyruvate. Catalyzes the phosphorylation of D-fructose 6-phosphate to fructose 1,6-bisphosphate by ATP, the first committing step of glycolysis. The protein is ATP-dependent 6-phosphofructokinase of Halothermothrix orenii (strain H 168 / OCM 544 / DSM 9562).